Consider the following 79-residue polypeptide: Acyl carrier protein (79 aa).

The Carrier domain occupies 2 to 77 (ADFEARVKEI…SAIDYVKTHV (76 aa)). At serine 37 the chain carries O-(pantetheine 4'-phosphoryl)serine.

It belongs to the acyl carrier protein (ACP) family. Post-translationally, 4'-phosphopantetheine is transferred from CoA to a specific serine of apo-ACP by AcpS. This modification is essential for activity because fatty acids are bound in thioester linkage to the sulfhydryl of the prosthetic group.

Its subcellular location is the cytoplasm. Its pathway is lipid metabolism; fatty acid biosynthesis. Its function is as follows. Carrier of the growing fatty acid chain in fatty acid biosynthesis. In Endomicrobium trichonymphae, this protein is Acyl carrier protein.